The chain runs to 421 residues: CinA-like protein (421 aa).

Belongs to the CinA family.

In Myxococcus xanthus (strain DK1622), this protein is CinA-like protein.